A 303-amino-acid polypeptide reads, in one-letter code: MTHEQKNILSVRDMEREEIDKLLCSAAAFDRGNYTGRELEGKILAVLFFEPSTRTRMSFSAAMMRLGGKILNLGSVEATSITKGETLSDTIRVISGYCDAIVLRHPKEGAARLASEVASVPVINGGDGAGQHPSQTLLDLFTIRESMRIENIDVGLQGDLRYGRTVHSLAFALAKYNNVRLHTIAPDGLDFPRYIKEDLRDIGVELIAHDHIEQALPELDVLYVTRLQRERFPDPVAFANYASTYRITPELLECAKPGMIVLHPLPRVDEIDPAVDSLPCAKYFEQAHNGVPIRMAMLNEVIN.

Positions 54 and 55 each coordinate carbamoyl phosphate. Lys83 contributes to the L-aspartate binding site. Carbamoyl phosphate-binding residues include Arg104, His132, and Gln135. L-aspartate-binding residues include Arg164 and Arg226. Carbamoyl phosphate contacts are provided by Leu265 and Pro266.

Belongs to the aspartate/ornithine carbamoyltransferase superfamily. ATCase family. Heterooligomer of catalytic and regulatory chains.

The enzyme catalyses carbamoyl phosphate + L-aspartate = N-carbamoyl-L-aspartate + phosphate + H(+). Its pathway is pyrimidine metabolism; UMP biosynthesis via de novo pathway; (S)-dihydroorotate from bicarbonate: step 2/3. Functionally, catalyzes the condensation of carbamoyl phosphate and aspartate to form carbamoyl aspartate and inorganic phosphate, the committed step in the de novo pyrimidine nucleotide biosynthesis pathway. The polypeptide is Aspartate carbamoyltransferase catalytic subunit (Methanocorpusculum labreanum (strain ATCC 43576 / DSM 4855 / Z)).